Here is a 165-residue protein sequence, read N- to C-terminus: MASYFDEHDCEPLNPEREARNNMLLELARRVRGAWSWAPGSRSLFNRMDFEDLGLVDWEHHLPPPAAKAVVESLPRTVIRSSKAELKCPVCLLEFEEEETVIEMPCHHLFHSNCILPWLSKTNSCPLCRHELPTDDDSYEEHKKDKARRQQQQHRLENLHGAMYT.

An RING-type; atypical zinc finger spans residues 88 to 129; it reads CPVCLLEFEEEETVIEMPCHHLFHSNCILPWLSKTNSCPLCR. Positions 136 to 165 are disordered; it reads DDSYEEHKKDKARRQQQQHRLENLHGAMYT. Threonine 165 is subject to Phosphothreonine.

The protein belongs to the RNF181 family. In terms of assembly, directly interacts with ITGA2B and, as a result, with integrin ITGA2B/ITGB3. There is no evidence that integrin ITGA2B/ITGB3 is an endogenous substrate for RNF181-directed ubiquitination. Auto-ubiquitinated as part of the enzymatic reaction.

It carries out the reaction S-ubiquitinyl-[E2 ubiquitin-conjugating enzyme]-L-cysteine + [acceptor protein]-L-lysine = [E2 ubiquitin-conjugating enzyme]-L-cysteine + N(6)-ubiquitinyl-[acceptor protein]-L-lysine.. The protein operates within protein modification; protein ubiquitination. Its function is as follows. E3 ubiquitin-protein ligase which accepts ubiquitin from an E2 ubiquitin-conjugating enzyme in the form of a thioester and then directly transfers the ubiquitin to targeted substrates. Catalyzes monoubiquitination of 26S proteasome subunit PSMC2/RPT1. The sequence is that of E3 ubiquitin-protein ligase RNF181 (Rnf181) from Rattus norvegicus (Rat).